Here is a 96-residue protein sequence, read N- to C-terminus: Integration host factor subunit beta (96 aa).

The protein belongs to the bacterial histone-like protein family. Heterodimer of an alpha and a beta chain.

Functionally, this protein is one of the two subunits of integration host factor, a specific DNA-binding protein that functions in genetic recombination as well as in transcriptional and translational control. The protein is Integration host factor subunit beta of Photobacterium profundum (strain SS9).